We begin with the raw amino-acid sequence, 386 residues long: MNIPVSLQSKPPLWLLAELTYRCPLQCAYCSNPLDYAAVKQELSTDEWKDVFRQARAMGSVQLGFSGGEPLLRQDLSELIKYAHELGFYTNLITSGIGLTEQKIAEFSEAGLDHIQISFQASDPALSEILSGSRKAFQQKQAMALAVKKHRYPMVLNFVIHRFNIEQIDQIIELSLELNADYVELATCQFYGWAKLNQAALLPTPEQISYAQARVQAYRQYIDQHHLKTKLLLVAPDYYQERPKKCIGGWGQIFITVSPDGTVLPCQSAKDLPLEFPTIQDQSLKTIWNEAFAFNAFRGTDWMQEPCRSCPDKDKDLGGCRCQAYMLTKNMYATDPVCSKSPVHHQIVEARLQTQCSKPDISDLKLRNPQNSKLFFKRASDADSLL.

Residues 9–228 (SKPPLWLLAE…RQYIDQHHLK (220 aa)) enclose the Radical SAM core domain. [4Fe-4S] cluster is bound by residues Cys-23, Cys-27, and Cys-30.

Belongs to the radical SAM superfamily. PqqE family. In terms of assembly, interacts with PqqD. The interaction is necessary for activity of PqqE. [4Fe-4S] cluster is required as a cofactor.

It carries out the reaction [PQQ precursor protein] + S-adenosyl-L-methionine = E-Y cross-linked-[PQQ precursor protein] + 5'-deoxyadenosine + L-methionine + H(+). Its pathway is cofactor biosynthesis; pyrroloquinoline quinone biosynthesis. Its function is as follows. Catalyzes the cross-linking of a glutamate residue and a tyrosine residue in the PqqA protein as part of the biosynthesis of pyrroloquinoline quinone (PQQ). This Acinetobacter baylyi (strain ATCC 33305 / BD413 / ADP1) protein is PqqA peptide cyclase.